We begin with the raw amino-acid sequence, 450 residues long: Phosphoglucosamine mutase (450 aa).

The active-site Phosphoserine intermediate is S104. Mg(2+)-binding residues include S104, D241, D243, and D245. Residue S104 is modified to Phosphoserine.

The protein belongs to the phosphohexose mutase family. It depends on Mg(2+) as a cofactor. Activated by phosphorylation.

The catalysed reaction is alpha-D-glucosamine 1-phosphate = D-glucosamine 6-phosphate. Catalyzes the conversion of glucosamine-6-phosphate to glucosamine-1-phosphate. This chain is Phosphoglucosamine mutase, found in Renibacterium salmoninarum (strain ATCC 33209 / DSM 20767 / JCM 11484 / NBRC 15589 / NCIMB 2235).